A 414-amino-acid chain; its full sequence is Esterase FrsA (414 aa).

Belongs to the FrsA family.

The enzyme catalyses a carboxylic ester + H2O = an alcohol + a carboxylate + H(+). In terms of biological role, catalyzes the hydrolysis of esters. This is Esterase FrsA from Escherichia coli (strain K12 / DH10B).